The following is a 518-amino-acid chain: Glutamate--cysteine ligase (518 aa).

The protein belongs to the glutamate--cysteine ligase type 1 family. Type 1 subfamily.

The enzyme catalyses L-cysteine + L-glutamate + ATP = gamma-L-glutamyl-L-cysteine + ADP + phosphate + H(+). The protein operates within sulfur metabolism; glutathione biosynthesis; glutathione from L-cysteine and L-glutamate: step 1/2. The protein is Glutamate--cysteine ligase of Escherichia fergusonii (strain ATCC 35469 / DSM 13698 / CCUG 18766 / IAM 14443 / JCM 21226 / LMG 7866 / NBRC 102419 / NCTC 12128 / CDC 0568-73).